A 629-amino-acid chain; its full sequence is MEGKPRKKSFTPRDGKKPSFKSKGKPGGKPQGKRPFKPHNNDKGKGFRKSGGEGGPQKFNRKPTDGKFAKKRKFPGDRIKQEEGDERKKPKWDEFKQKKKELKLNRQQTDRKESYQIVSRAKQVWEMVRRKDCDKQKRTKLMKELQDLVKGKIKTIAFAHDSTRVLQCFIQFGSDKQRKEVFDELKEHIVELSKSKYARNIVKKFLMYGSKEQVGEVMLAFKGKVRQMLRHSEASSVVEYAYNDKAILSQRLMLTEELYGNTFTVLKSSVCPTLEKVLEANPGKLESILDEMKQILTPMAQKEAVIKHSLVHKVFLDFFEHAPDKQRTEMIESIREAVVYMAHTHDGARVTMHCLWHGTTKDRKVIVKTMKSYIAKFAMGEYAHLVLLAAFDCIDDTKLVKQIIISEMVSSLSEIISNKHGKKVLLYLLSPRDPAHLLPEIIQVLEKGDGNAHSKKDVLIRRKELLEAASPSLLNHLCENAQSMVMDKSCCVVVSDILGSAVGDLRPAMEAVAALADGPLIPGGKDGQLHMAEHPAGHLVLKWLIEQDTKMKDTEREERFSRILLEKVGLENLKTWASVNRGAIILCCLLQSADESVAEEVKAMLKSSIPELQRLQNSKGIEVLLEKLA.

Basic residues-rich tracts occupy residues 1–10 (MEGKPRKKSF) and 18–37 (PSFKSKGKPGGKPQGKRPFK). The disordered stretch occupies residues 1 to 92 (MEGKPRKKSF…EGDERKKPKW (92 aa)). A compositionally biased stretch (basic and acidic residues) spans 62–92 (KPTDGKFAKKRKFPGDRIKQEEGDERKKPKW). A Nuclear localization signal motif is present at residues 88-100 (KKPKWDEFKQKKK). The PUM-HD domain occupies 120-473 (RAKQVWEMVR…ELLEAASPSL (354 aa)). Pumilio repeat units lie at residues 160 to 195 (HDSTRVLQCFIQFGSDKQRKEVFDELKEHIVELSKS), 196 to 231 (KYARNIVKKFLMYGSKEQVGEVMLAFKGKVRQMLRH), 232 to 260 (SEASSVVEYAYNDKAILSQRLMLTEELYG), 272 to 308 (PTLEKVLEANPGKLESILDEMKQILTPMAQKEAVIKH), 309 to 344 (SLVHKVFLDFFEHAPDKQRTEMIESIREAVVYMAHT), 345 to 380 (HDGARVTMHCLWHGTTKDRKVIVKTMKSYIAKFAMG), 381 to 418 (EYAHLVLLAAFDCIDDTKLVKQIIISEMVSSLSEIISN), 419 to 487 (KHGK…MVMD), 488 to 534 (KSCC…MAEH), 535 to 579 (PAGH…WASV), and 580 to 618 (NRGAIILCCLLQSADESVAEEVKAMLKSSIPELQRLQNS).

As to expression, in adult, expressed at high levels in eye and ovary and at lower levels in brain, testis and head kidney. In the adult ovary, prominently expressed in early immature follicles.

Its subcellular location is the nucleus. The protein resides in the nucleolus. It localises to the nucleoplasm. The protein localises to the chromosome. Functionally, inhibits the poly(ADP-ribosyl)ation activity of PARP1 and the degradation of PARP1 by CASP3 following genotoxic stress. Binds to double-stranded RNA or DNA without sequence specificity. Involved in development of the eye and of primordial germ cells. The polypeptide is Pumilio homolog 3 (pum3) (Danio rerio (Zebrafish)).